The chain runs to 684 residues: UvrABC system protein B (684 aa).

One can recognise a Helicase ATP-binding domain in the interval 32 to 420 (DGVLRGDRWQ…GGVVVEQLIR (389 aa)). 45-52 (GVTGSGKT) contacts ATP. The Beta-hairpin signature appears at 98 to 121 (YYDFYQPEAYIPSLDKYIAKDLKI). One can recognise a Helicase C-terminal domain in the interval 437–603 (QIDHLLARIR…SIIKSVDQVL (167 aa)). Positions 643–678 (MLMVAEMNAEMQKAAEQTDYEKAAYLRDEILMLQER) constitute a UVR domain.

This sequence belongs to the UvrB family. As to quaternary structure, forms a heterotetramer with UvrA during the search for lesions. Interacts with UvrC in an incision complex.

The protein localises to the cytoplasm. Its function is as follows. The UvrABC repair system catalyzes the recognition and processing of DNA lesions. A damage recognition complex composed of 2 UvrA and 2 UvrB subunits scans DNA for abnormalities. Upon binding of the UvrA(2)B(2) complex to a putative damaged site, the DNA wraps around one UvrB monomer. DNA wrap is dependent on ATP binding by UvrB and probably causes local melting of the DNA helix, facilitating insertion of UvrB beta-hairpin between the DNA strands. Then UvrB probes one DNA strand for the presence of a lesion. If a lesion is found the UvrA subunits dissociate and the UvrB-DNA preincision complex is formed. This complex is subsequently bound by UvrC and the second UvrB is released. If no lesion is found, the DNA wraps around the other UvrB subunit that will check the other stand for damage. This chain is UvrABC system protein B, found in Chlorobaculum tepidum (strain ATCC 49652 / DSM 12025 / NBRC 103806 / TLS) (Chlorobium tepidum).